The primary structure comprises 174 residues: Myeloid-derived growth factor (174 aa).

The N-terminal stretch at 1–32 (MAAPSGRRNGSGGANLWVSLLLAAAALRPVET) is a signal peptide.

It belongs to the MYDGF family.

It is found in the secreted. The protein resides in the endoplasmic reticulum-Golgi intermediate compartment. The protein localises to the endoplasmic reticulum. It localises to the golgi apparatus. In terms of biological role, bone marrow-derived monocyte and paracrine-acting protein that promotes cardiac myocyte survival and adaptive angiogenesis for cardiac protection and/or repair after myocardial infarction (MI). Stimulates endothelial cell proliferation through a MAPK1/3-, STAT3- and CCND1-mediated signaling pathway. Inhibits cardiac myocyte apoptosis in a PI3K/AKT-dependent signaling pathway. The chain is Myeloid-derived growth factor from Bos taurus (Bovine).